We begin with the raw amino-acid sequence, 329 residues long: Tryptophan--tRNA ligase (329 aa).

ATP is bound by residues 9–11 (QPS) and 17–18 (GN). The 'HIGH' region signature appears at 10-18 (PSGTITLGN). D132 is a binding site for L-tryptophan. ATP-binding positions include 144–146 (GDD), V183, and 192–196 (KMSKS). A 'KMSKS' region motif is present at residues 192 to 196 (KMSKS).

Belongs to the class-I aminoacyl-tRNA synthetase family. In terms of assembly, homodimer.

The protein resides in the cytoplasm. The catalysed reaction is tRNA(Trp) + L-tryptophan + ATP = L-tryptophyl-tRNA(Trp) + AMP + diphosphate + H(+). Its function is as follows. Catalyzes the attachment of tryptophan to tRNA(Trp). In Bacillus anthracis, this protein is Tryptophan--tRNA ligase.